The chain runs to 523 residues: Excitatory amino acid transporter 3 (523 aa).

The Cytoplasmic segment spans residues Met1–His18. The helical transmembrane segment at Trp19–Val38 threads the bilayer. Over Arg39–Arg61 the chain is Extracellular. A helical transmembrane segment spans residues Met62–Leu82. Residues Asp83–Arg93 lie on the Cytoplasmic side of the membrane. The helical transmembrane segment at Ala94–Val114 threads the bilayer. 3 residues coordinate Na(+): Tyr98, Thr101, and Thr102. At Ser115–Leu204 the chain is on the extracellular side. 3 N-linked (GlcNAc...) asparagine glycosylation sites follow: Asn128, Asn178, and Asn194. The chain crosses the membrane as a helical span at residues Tyr205–Met228. Over Gly229–Asp237 the chain is Cytoplasmic. A helical transmembrane segment spans residues Phe238–Ile265. Residues Ala266–Met285 are Extracellular-facing. The helical transmembrane segment at Ala286–Val307 threads the bilayer. At Val308–Pro312 the chain is on the cytoplasmic side. Residues Phe313–Ala343 constitute an intramembrane region (discontinuously helical). Ser330 and Ser332 together coordinate L-aspartate. The Cytoplasmic portion of the chain corresponds to Glu344–Arg352. The chain crosses the membrane as a helical span at residues Ile353–Phe379. Gly361, Thr363, Asn365, and Asp367 together coordinate Na(+). Thr369 serves as a coordination point for L-aspartate. Residues Ile380–Gln392 are Extracellular-facing. Positions Ile393 to Gly426 form an intramembrane region, discontinuously helical. Ser404, Ile405, and Ala407 together coordinate Na(+). Val410 contacts L-aspartate. Residues Leu427–Asp439 are Extracellular-facing. The chain crosses the membrane as a helical span at residues Trp440–Val461. Arg446, Thr447, and Asn450 together coordinate L-aspartate. Na(+) contacts are provided by Asn450 and Asp454. At Glu462–Phe523 the chain is on the cytoplasmic side. Ser516 and Ser521 each carry phosphoserine.

The protein belongs to the dicarboxylate/amino acid:cation symporter (DAACS) (TC 2.A.23) family. SLC1A1 subfamily. In terms of assembly, homotrimer. Interacts with ARL6IP5. Interacts with RTN2 (via N-terminus); the interaction promotes cell surface expression of SLC1A1. Interacts with SORCS2; this interaction is important for normal expression at the cell membrane. In terms of tissue distribution, detected on neurons in the brain cortex, dentate gyrus and hippocampus CA2 region (at protein level). Expressed in whole brain, brain cortex, hippocampus, cerebellum, lung, kidney, small intestine and skeletal muscle. Expressed in the renal outer medulla, medullary ray and cortex (at protein level).

It localises to the cell membrane. Its subcellular location is the apical cell membrane. The protein localises to the synapse. It is found in the synaptosome. The protein resides in the early endosome membrane. It localises to the late endosome membrane. Its subcellular location is the recycling endosome membrane. The catalysed reaction is K(+)(in) + L-glutamate(out) + 3 Na(+)(out) + H(+)(out) = K(+)(out) + L-glutamate(in) + 3 Na(+)(in) + H(+)(in). The enzyme catalyses K(+)(in) + L-aspartate(out) + 3 Na(+)(out) + H(+)(out) = K(+)(out) + L-aspartate(in) + 3 Na(+)(in) + H(+)(in). It catalyses the reaction D-aspartate(out) + K(+)(in) + 3 Na(+)(out) + H(+)(out) = D-aspartate(in) + K(+)(out) + 3 Na(+)(in) + H(+)(in). It carries out the reaction K(+)(in) + L-cysteine(out) + 3 Na(+)(out) + H(+)(out) = K(+)(out) + L-cysteine(in) + 3 Na(+)(in) + H(+)(in). Functionally, sodium-dependent, high-affinity amino acid transporter that mediates the uptake of L-glutamate and also L-aspartate and D-aspartate. Can also transport L-cysteine. Functions as a symporter that transports one amino acid molecule together with two or three Na(+) ions and one proton, in parallel with the counter-transport of one K(+) ion. Mediates Cl(-) flux that is not coupled to amino acid transport; this avoids the accumulation of negative charges due to aspartate and Na(+) symport. Plays an important role in L-glutamate and L-aspartate reabsorption in renal tubuli. Plays a redundant role in the rapid removal of released glutamate from the synaptic cleft, which is essential for terminating the postsynaptic action of glutamate. Contributes to glutathione biosynthesis and protection against oxidative stress via its role in L-glutamate and L-cysteine transport. Negatively regulated by ARL6IP5. This chain is Excitatory amino acid transporter 3 (Slc1a1), found in Mus musculus (Mouse).